A 251-amino-acid chain; its full sequence is uncharacterized protein (251 aa).

Belongs to the methyltransferase superfamily.

Its subcellular location is the cytoplasm. The protein localises to the nucleus. In terms of biological role, probable methyltransferase. This is an uncharacterized protein from Schizosaccharomyces pombe (strain 972 / ATCC 24843) (Fission yeast).